Reading from the N-terminus, the 306-residue chain is Aspartate carbamoyltransferase catalytic subunit (306 aa).

Carbamoyl phosphate-binding residues include Arg-55 and Thr-56. Lys-84 contributes to the L-aspartate binding site. Residues Arg-105, His-133, and Gln-136 each contribute to the carbamoyl phosphate site. Positions 166 and 227 each coordinate L-aspartate. Carbamoyl phosphate-binding residues include Leu-265 and Pro-266.

Belongs to the aspartate/ornithine carbamoyltransferase superfamily. ATCase family. In terms of assembly, heterododecamer (2C3:3R2) of six catalytic PyrB chains organized as two trimers (C3), and six regulatory PyrI chains organized as three dimers (R2).

The enzyme catalyses carbamoyl phosphate + L-aspartate = N-carbamoyl-L-aspartate + phosphate + H(+). Its pathway is pyrimidine metabolism; UMP biosynthesis via de novo pathway; (S)-dihydroorotate from bicarbonate: step 2/3. Functionally, catalyzes the condensation of carbamoyl phosphate and aspartate to form carbamoyl aspartate and inorganic phosphate, the committed step in the de novo pyrimidine nucleotide biosynthesis pathway. The chain is Aspartate carbamoyltransferase catalytic subunit from Aeromonas hydrophila subsp. hydrophila (strain ATCC 7966 / DSM 30187 / BCRC 13018 / CCUG 14551 / JCM 1027 / KCTC 2358 / NCIMB 9240 / NCTC 8049).